The chain runs to 493 residues: Cytochrome P450 2A9 (493 aa).

A heme-binding site is contributed by Cys438.

It belongs to the cytochrome P450 family. It depends on heme as a cofactor. Liver.

Its subcellular location is the endoplasmic reticulum membrane. The protein resides in the microsome membrane. It catalyses the reaction an organic molecule + reduced [NADPH--hemoprotein reductase] + O2 = an alcohol + oxidized [NADPH--hemoprotein reductase] + H2O + H(+). Cytochromes P450 are a group of heme-thiolate monooxygenases. In liver microsomes, this enzyme is involved in an NADPH-dependent electron transport pathway. It oxidizes a variety of structurally unrelated compounds, including steroids, fatty acids, and xenobiotics. The sequence is that of Cytochrome P450 2A9 (CYP2A9) from Mesocricetus auratus (Golden hamster).